The following is a 426-amino-acid chain: Serine--tRNA ligase (426 aa).

235–237 (TAE) contacts L-serine. ATP-binding positions include 266-268 (RRE) and valine 282. Glutamate 289 lines the L-serine pocket. 353 to 356 (EASS) is a binding site for ATP. Serine 389 lines the L-serine pocket.

The protein belongs to the class-II aminoacyl-tRNA synthetase family. Type-1 seryl-tRNA synthetase subfamily. Homodimer. The tRNA molecule binds across the dimer.

The protein resides in the cytoplasm. It catalyses the reaction tRNA(Ser) + L-serine + ATP = L-seryl-tRNA(Ser) + AMP + diphosphate + H(+). The catalysed reaction is tRNA(Sec) + L-serine + ATP = L-seryl-tRNA(Sec) + AMP + diphosphate + H(+). It participates in aminoacyl-tRNA biosynthesis; selenocysteinyl-tRNA(Sec) biosynthesis; L-seryl-tRNA(Sec) from L-serine and tRNA(Sec): step 1/1. Catalyzes the attachment of serine to tRNA(Ser). Is also able to aminoacylate tRNA(Sec) with serine, to form the misacylated tRNA L-seryl-tRNA(Sec), which will be further converted into selenocysteinyl-tRNA(Sec). In Chlorobium chlorochromatii (strain CaD3), this protein is Serine--tRNA ligase.